A 112-amino-acid chain; its full sequence is Protein lin-52 homolog (112 aa).

It belongs to the lin-52 family. As to quaternary structure, component of the DREAM complex.

The protein is Protein lin-52 homolog (lin52) of Danio rerio (Zebrafish).